The following is a 495-amino-acid chain: Glutamate--tRNA ligase (495 aa).

Positions 14 to 24 (PSPTGYLHIGS) match the 'HIGH' region motif. Positions 255–259 (KLSKR) match the 'KMSKS' region motif. Lysine 258 contacts ATP.

Belongs to the class-I aminoacyl-tRNA synthetase family. Glutamate--tRNA ligase type 1 subfamily. Monomer.

It localises to the cytoplasm. It catalyses the reaction tRNA(Glu) + L-glutamate + ATP = L-glutamyl-tRNA(Glu) + AMP + diphosphate. Its function is as follows. Catalyzes the attachment of glutamate to tRNA(Glu) in a two-step reaction: glutamate is first activated by ATP to form Glu-AMP and then transferred to the acceptor end of tRNA(Glu). The polypeptide is Glutamate--tRNA ligase (Herpetosiphon aurantiacus (strain ATCC 23779 / DSM 785 / 114-95)).